A 229-amino-acid polypeptide reads, in one-letter code: Transmembrane protein 182 (229 aa).

Residues 1 to 26 form the signal peptide; sequence MRLNIAIFFGALFGALGVLLFLVAFG. The Extracellular portion of the chain corresponds to 27–114; it reads SDYWLLATEV…SYDSAVIYRG (88 aa). The N-linked (GlcNAc...) asparagine glycan is linked to N47. The tract at residues 49-59 is interaction with ITGB1; the sequence is TFHHEGFFWRC. N102 is a glycosylation site (N-linked (GlcNAc...) asparagine). Residues 115–135 form a helical membrane-spanning segment; that stretch reads FWAVLMLLGVVAVVIASFLII. Topologically, residues 136-153 are cytoplasmic; it reads CAAPFASHFLYKAGGGSY. Residues 154 to 174 form a helical membrane-spanning segment; sequence IAAGILFSLVVMLYVIWVQAV. At 175 to 200 the chain is on the extracellular side; the sequence is ADMESYRNMKMKDCLDFTPSVLYGWS. The helical transmembrane segment at 201–221 threads the bilayer; the sequence is FFLAPAGIFFSLLAGLLFLVV. Topologically, residues 222-229 are cytoplasmic; it reads GWHIQIHH.

This sequence belongs to the TMEM182 family. Interacts with ITGB1.

It is found in the cell membrane. Negatively regulates myogenesis and skeletal muscle regeneration via its association with ITGB1. Modulates ITGB1 activation by decreasing ITGB1-LAMB1 interaction and inhibiting ITGB1-mediated intracellular signaling during myogenesis. The chain is Transmembrane protein 182 (TMEM182) from Homo sapiens (Human).